The chain runs to 322 residues: Undecaprenyl-phosphate 4-deoxy-4-formamido-L-arabinose transferase (322 aa).

The Cytoplasmic portion of the chain corresponds to 1 to 235 (MFEIHPVKKV…TCLTTTPLRM (235 aa)). The helical transmembrane segment at 236 to 256 (LSLLGSIIAIGGFSIAVLLVI) threads the bilayer. Topologically, residues 257–269 (LRLTFGPQWAAEG) are periplasmic. Residues 270 to 290 (VFMLFAVLFTFIGAQFIGMGL) form a helical membrane-spanning segment. At 291–322 (LGEYIGRIYTDVRARPRYFVQQVIRPSSKENE) the chain is on the cytoplasmic side.

This sequence belongs to the glycosyltransferase 2 family.

The protein localises to the cell inner membrane. The catalysed reaction is UDP-4-deoxy-4-formamido-beta-L-arabinose + di-trans,octa-cis-undecaprenyl phosphate = 4-deoxy-4-formamido-alpha-L-arabinopyranosyl di-trans,octa-cis-undecaprenyl phosphate + UDP. It functions in the pathway glycolipid biosynthesis; 4-amino-4-deoxy-alpha-L-arabinose undecaprenyl phosphate biosynthesis; 4-amino-4-deoxy-alpha-L-arabinose undecaprenyl phosphate from UDP-4-deoxy-4-formamido-beta-L-arabinose and undecaprenyl phosphate: step 1/2. It participates in bacterial outer membrane biogenesis; lipopolysaccharide biosynthesis. In terms of biological role, catalyzes the transfer of 4-deoxy-4-formamido-L-arabinose from UDP to undecaprenyl phosphate. The modified arabinose is attached to lipid A and is required for resistance to polymyxin and cationic antimicrobial peptides. In Shigella flexneri serotype 5b (strain 8401), this protein is Undecaprenyl-phosphate 4-deoxy-4-formamido-L-arabinose transferase.